The following is a 610-amino-acid chain: Autophagy-related protein 22-1 (610 aa).

Over residues 1–11 (MAFTPSSPPSP) the composition is skewed to pro residues. The interval 1-29 (MAFTPSSPPSPAADASQRPSRYPGEDTTP) is disordered. The chain crosses the membrane as a helical span at residues 35–55 (ILGWYAYGIAAEVFAVCGVGS). N90 carries an N-linked (GlcNAc...) asparagine glycan. 3 helical membrane passes run 120–140 (SFAM…LISF), 152–171 (TLLL…FVFV), and 189–209 (CLGS…ANDP). The disordered stretch occupies residues 229–265 (GQFEPRDSFSERNPEFESQYTPGIGLGSKPSTNATSP). The span at 232-243 (EPRDSFSERNPE) shows a compositional bias: basic and acidic residues. Residue N261 is glycosylated (N-linked (GlcNAc...) asparagine). 8 consecutive transmembrane segments (helical) span residues 278–298 (VGLG…LLFA), 310–330 (TLPL…FTMV), 384–404 (VFLV…GTAI), 418–438 (VGCL…LWPV), 453–473 (LCIA…IPLF), 488–510 (FPLA…SFFG), 522–544 (YALY…GMLI), and 553–573 (GFFF…MVNA). The disordered stretch occupies residues 588-610 (AKGQESETGEPGEEAEGLLARGA). Positions 594–603 (ETGEPGEEAE) are enriched in acidic residues.

This sequence belongs to the ATG22 family.

Its subcellular location is the vacuole membrane. In terms of biological role, vacuolar effluxer which mediate the efflux of amino acids resulting from autophagic degradation. The release of autophagic amino acids allows the maintenance of protein synthesis and viability during nitrogen starvation. The sequence is that of Autophagy-related protein 22-1 (atg22-1) from Aspergillus terreus (strain NIH 2624 / FGSC A1156).